Reading from the N-terminus, the 462-residue chain is uncharacterized protein (462 aa).

The TRAM domain occupies 12–70 (MLKKNDIIQVAISDLSHEGAGVAKHDGFVFFVDNALPEEVIDMRVLKVNKNSGFGKVEA). Gln294, Tyr323, Glu344, and Asp392 together coordinate S-adenosyl-L-methionine. The Nucleophile role is filled by Cys419.

This sequence belongs to the class I-like SAM-binding methyltransferase superfamily. RNA M5U methyltransferase family.

This is an uncharacterized protein from Streptococcus pyogenes serotype M18 (strain MGAS8232).